Consider the following 904-residue polypeptide: Protein translocase subunit SecA (904 aa).

Residues glutamine 87, 105 to 109 (GEGKT), and aspartate 512 each bind ATP. Residues 851 to 870 (LARQQQLSHQTDNSALMSEE) are disordered. Cysteine 888, cysteine 890, cysteine 899, and histidine 900 together coordinate Zn(2+).

The protein belongs to the SecA family. In terms of assembly, monomer and homodimer. Part of the essential Sec protein translocation apparatus which comprises SecA, SecYEG and auxiliary proteins SecDF-YajC and YidC. It depends on Zn(2+) as a cofactor.

The protein resides in the cell inner membrane. Its subcellular location is the cytoplasm. It catalyses the reaction ATP + H2O + cellular proteinSide 1 = ADP + phosphate + cellular proteinSide 2.. In terms of biological role, part of the Sec protein translocase complex. Interacts with the SecYEG preprotein conducting channel. Has a central role in coupling the hydrolysis of ATP to the transfer of proteins into and across the cell membrane, serving both as a receptor for the preprotein-SecB complex and as an ATP-driven molecular motor driving the stepwise translocation of polypeptide chains across the membrane. This chain is Protein translocase subunit SecA, found in Yersinia pseudotuberculosis serotype O:1b (strain IP 31758).